The sequence spans 252 residues: 4-formylbenzenesulfonate dehydrogenase TsaC1/TsaC2 (252 aa).

NAD(+)-binding positions include I9 to D36 and D62. S142 contributes to the substrate binding site. The active-site Proton acceptor is Y155. Residue K159 coordinates NAD(+).

It belongs to the short-chain dehydrogenases/reductases (SDR) family. As to quaternary structure, homodimer.

It catalyses the reaction 4-formylbenzenesulfonate + NAD(+) + H2O = 4-sulfobenzoate + NADH + 2 H(+). In terms of biological role, involved in the toluene-4-sulfonate degradation pathway. Does not discriminate between the sulfonate and the carboxyl substituents and can also be involved in the p-toluenecarboxylate degradation pathway. This is 4-formylbenzenesulfonate dehydrogenase TsaC1/TsaC2 (tsaC1) from Comamonas testosteroni (Pseudomonas testosteroni).